A 357-amino-acid polypeptide reads, in one-letter code: Anthranilate phosphoribosyltransferase (357 aa).

Residues Gly-91, 94 to 95, Thr-99, 101 to 104, 119 to 127, and Ser-131 contribute to the 5-phospho-alpha-D-ribose 1-diphosphate site; these read GD, NIST, and KHGNRSVSS. Gly-91 lines the anthranilate pocket. Ser-103 serves as a coordination point for Mg(2+). Asn-122 contributes to the anthranilate binding site. Arg-177 is an anthranilate binding site. Mg(2+) contacts are provided by Asp-235 and Glu-236.

It belongs to the anthranilate phosphoribosyltransferase family. Homodimer. The cofactor is Mg(2+).

The catalysed reaction is N-(5-phospho-beta-D-ribosyl)anthranilate + diphosphate = 5-phospho-alpha-D-ribose 1-diphosphate + anthranilate. Its pathway is amino-acid biosynthesis; L-tryptophan biosynthesis; L-tryptophan from chorismate: step 2/5. Functionally, catalyzes the transfer of the phosphoribosyl group of 5-phosphorylribose-1-pyrophosphate (PRPP) to anthranilate to yield N-(5'-phosphoribosyl)-anthranilate (PRA). The sequence is that of Anthranilate phosphoribosyltransferase from Shewanella baltica (strain OS155 / ATCC BAA-1091).